The primary structure comprises 279 residues: Shikimate dehydrogenase (NADP(+)) (279 aa).

Residues 19-21 (SFS) and Thr66 each bind shikimate. The active-site Proton acceptor is the Lys70. Glu82 serves as a coordination point for NADP(+). Asn91 and Asp106 together coordinate shikimate. NADP(+)-binding positions include 130–134 (GSGGA) and Leu222. Tyr224 contacts shikimate. Residue Gly245 coordinates NADP(+).

This sequence belongs to the shikimate dehydrogenase family. Homodimer.

It carries out the reaction shikimate + NADP(+) = 3-dehydroshikimate + NADPH + H(+). It functions in the pathway metabolic intermediate biosynthesis; chorismate biosynthesis; chorismate from D-erythrose 4-phosphate and phosphoenolpyruvate: step 4/7. In terms of biological role, involved in the biosynthesis of the chorismate, which leads to the biosynthesis of aromatic amino acids. Catalyzes the reversible NADPH linked reduction of 3-dehydroshikimate (DHSA) to yield shikimate (SA). This is Shikimate dehydrogenase (NADP(+)) from Methanococcus maripaludis (strain C6 / ATCC BAA-1332).